Consider the following 1439-residue polypeptide: Fanconi anemia group A protein homolog (1439 aa).

Residues 1–20 (MPGSPARGAAMGGGPRGLRK) form a disordered region. The Nuclear localization signal signature appears at 19 to 35 (RKTWTELLAGRVKKQKY).

Belongs to the multisubunit FA complex composed of FANCA, FANCB, FANCC, FANCE, FANCF, FANCG, FANCL/PHF9 and FANCM. In complex with FANCF, FANCG and FANCL, but not with FANCC, nor FANCE, interacts with HES1; this interaction may be essential for the stability and nuclear localization of FA core complex proteins. The complex with FANCC and FANCG may also include EIF2AK2 and HSP70. Interacts with FAAP20; interaction is direct. Phosphorylated primarily on serine residues. Phosphorylation is required for the formation of the nuclear complex. As to expression, mainly expressed in testis and lymphoid tissues like thymus, lymph nodes, and spleen, and at lower levels in kidney and ovary.

Its subcellular location is the nucleus. The protein resides in the cytoplasm. Its function is as follows. DNA repair protein that may operate in a postreplication repair or a cell cycle checkpoint function. May be involved in interstrand DNA cross-link repair and in the maintenance of normal chromosome stability. The polypeptide is Fanconi anemia group A protein homolog (Fanca) (Mus musculus (Mouse)).